The primary structure comprises 156 residues: Small ribosomal subunit protein uS7 (156 aa).

This sequence belongs to the universal ribosomal protein uS7 family. As to quaternary structure, part of the 30S ribosomal subunit. Contacts proteins S9 and S11.

Its function is as follows. One of the primary rRNA binding proteins, it binds directly to 16S rRNA where it nucleates assembly of the head domain of the 30S subunit. Is located at the subunit interface close to the decoding center, probably blocks exit of the E-site tRNA. The protein is Small ribosomal subunit protein uS7 of Leptothrix cholodnii (strain ATCC 51168 / LMG 8142 / SP-6) (Leptothrix discophora (strain SP-6)).